Here is a 275-residue protein sequence, read N- to C-terminus: T-cell ecto-ADP-ribosyltransferase 1 (275 aa).

The signal sequence occupies residues 1 to 20 (MPSNICKFFLTWWLIQQVTG). Cystine bridges form between Cys-41–Cys-243 and Cys-141–Cys-193. Asn-58 is a glycosylation site (N-linked (GlcNAc...) asparagine). One can recognise a TR mART core domain in the interval 61–238 (EKLKVAWEEA…IFLDSPKRKK (178 aa)). Residues Tyr-98, Arg-146, and Gln-164 each contribute to the NAD(+) site. The active site involves Arg-146. Ser-167 is an active-site residue. Ser-202 serves as a coordination point for NAD(+). Residue Glu-209 is part of the active site. The GPI-anchor amidated serine moiety is linked to residue Ser-246. A propeptide spans 247-275 (SAGTRESCVSLFLVVLTSLLVQLLCLAEP) (removed in mature form).

This sequence belongs to the Arg-specific ADP-ribosyltransferase family. As to expression, postthymic T-cells.

The protein localises to the cell membrane. It catalyses the reaction L-arginyl-[protein] + NAD(+) = N(omega)-(ADP-D-ribosyl)-L-arginyl-[protein] + nicotinamide + H(+). The enzyme catalyses NAD(+) + H2O = ADP-D-ribose + nicotinamide + H(+). Its function is as follows. Has NAD(+) glycohydrolase activity and extremely low ADP-ribosyltransferase activity. The chain is T-cell ecto-ADP-ribosyltransferase 1 (Art2a) from Rattus norvegicus (Rat).